The sequence spans 26 residues: uncharacterized protein (26 aa).

It localises to the plastid. The protein resides in the chloroplast. This is an uncharacterized protein from Trieres chinensis (Marine centric diatom).